Here is a 749-residue protein sequence, read N- to C-terminus: ATP-dependent zinc metalloprotease FtsH 3 (749 aa).

The segment covering 1–17 has biased composition (basic and acidic residues); sequence MTGDPPERRSNGDRLPA. The disordered stretch occupies residues 1 to 67; sequence MTGDPPERRS…GRNGGGMRPF (67 aa). The Cytoplasmic segment spans residues 1-75; the sequence is MTGDPPERRS…PFRFPGGRWG (75 aa). The helical transmembrane segment at 76–96 threads the bilayer; the sequence is ILVFILVLLGLNWWISSNALA. Residues 97–186 are Extracellular-facing; it reads PSERVRVPYS…NASPADNGPS (90 aa). Residues 187–207 form a helical membrane-spanning segment; that stretch reads LLVSILLGFGPVILIIALFVF. Residues 208-749 are Cytoplasmic-facing; that stretch reads LSRRMAGAAG…LGGSVRAGDA (542 aa). 281–288 provides a ligand contact to ATP; sequence GQPGTGKT. Position 504 (His-504) interacts with Zn(2+). The active site involves Glu-505. Residues His-508 and Asp-580 each contribute to the Zn(2+) site. Residues 679-689 are compositionally biased toward basic and acidic residues; it reads GLEHMRPERVE. The segment at 679-749 is disordered; sequence GLEHMRPERV…LGGSVRAGDA (71 aa).

It in the central section; belongs to the AAA ATPase family. In the C-terminal section; belongs to the peptidase M41 family. Homohexamer. Zn(2+) is required as a cofactor.

The protein resides in the cell membrane. In terms of biological role, acts as a processive, ATP-dependent zinc metallopeptidase for both cytoplasmic and membrane proteins. Plays a role in the quality control of integral membrane proteins. The chain is ATP-dependent zinc metalloprotease FtsH 3 from Conexibacter woesei (strain DSM 14684 / CCUG 47730 / CIP 108061 / JCM 11494 / NBRC 100937 / ID131577).